The chain runs to 305 residues: Divergent heme oxygenase-like protein (305 aa).

Residues 1-18 form the signal peptide; that stretch reads MIRKIIILMFTFFSNIHN. The sufficient for apicoplast targeting stretch occupies residues 1-83; the sequence is MIRKIIILMF…GVDKNNINYN (83 aa). Residues N132, N159, and N288 are each glycosylated (N-linked (GlcNAc...) asparagine).

Post-translationally, proteolytically cleaved; targeted by its N-terminal leader sequence for import into the apicoplast where it undergoes proteolytic processing, resulting in an N-terminus starting at or near Gly-33 in the mature protein.

Its subcellular location is the plastid. It is found in the apicoplast. Essential for blood-stage parasite viability. Required for apicoplast biogenesis. Associates with the apicoplast genome and mediates apicoplast gene expression. Can bind heme. Can bind protoporphyrin IX. The protein is Divergent heme oxygenase-like protein of Plasmodium falciparum (isolate 3D7).